The chain runs to 380 residues: Queuine tRNA-ribosyltransferase (380 aa).

The active-site Proton acceptor is the Asp-96. Substrate-binding positions include 96-100 (DSGGF), Asp-150, Gln-193, and Gly-220. An RNA binding region spans residues 251–257 (GVGAPDS). The active-site Nucleophile is Asp-270. Residues 275-279 (TRIAR) are RNA binding; important for wobble base 34 recognition. Zn(2+) contacts are provided by Cys-308, Cys-310, Cys-313, and His-339.

It belongs to the queuine tRNA-ribosyltransferase family. In terms of assembly, homodimer. Within each dimer, one monomer is responsible for RNA recognition and catalysis, while the other monomer binds to the replacement base PreQ1. Zn(2+) serves as cofactor.

It catalyses the reaction 7-aminomethyl-7-carbaguanine + guanosine(34) in tRNA = 7-aminomethyl-7-carbaguanosine(34) in tRNA + guanine. Its pathway is tRNA modification; tRNA-queuosine biosynthesis. Functionally, catalyzes the base-exchange of a guanine (G) residue with the queuine precursor 7-aminomethyl-7-deazaguanine (PreQ1) at position 34 (anticodon wobble position) in tRNAs with GU(N) anticodons (tRNA-Asp, -Asn, -His and -Tyr). Catalysis occurs through a double-displacement mechanism. The nucleophile active site attacks the C1' of nucleotide 34 to detach the guanine base from the RNA, forming a covalent enzyme-RNA intermediate. The proton acceptor active site deprotonates the incoming PreQ1, allowing a nucleophilic attack on the C1' of the ribose to form the product. After dissociation, two additional enzymatic reactions on the tRNA convert PreQ1 to queuine (Q), resulting in the hypermodified nucleoside queuosine (7-(((4,5-cis-dihydroxy-2-cyclopenten-1-yl)amino)methyl)-7-deazaguanosine). This Streptococcus equi subsp. equi (strain 4047) protein is Queuine tRNA-ribosyltransferase.